The sequence spans 900 residues: E3 ubiquitin-protein ligase BRE1-like 2 (900 aa).

Residues 1–31 (MENQESDEPMQKKPHLLDSVSPNSMARNSSP) form a disordered region. Residues 20 to 31 (VSPNSMARNSSP) are compositionally biased toward polar residues. Coiled coils occupy residues 63–96 (TVLQ…LQLN), 217–300 (EDAT…KDAA), 437–660 (SRIE…AEME), and 706–737 (SEKQ…EQMK). The RING-type zinc finger occupies 848–887 (CGVCFDRPKEVVIVKCYHLFCQQCIQRSLEIRHRKCPGCG).

It belongs to the BRE1 family. As to quaternary structure, may act as a tetramer consisting of two copies of HUB1 and two copies of HUB2. In terms of tissue distribution, ubiquitously expressed.

The protein resides in the nucleus. It carries out the reaction S-ubiquitinyl-[E2 ubiquitin-conjugating enzyme]-L-cysteine + [acceptor protein]-L-lysine = [E2 ubiquitin-conjugating enzyme]-L-cysteine + N(6)-ubiquitinyl-[acceptor protein]-L-lysine.. Its pathway is protein modification; protein ubiquitination. In terms of biological role, E3 ubiquitin-protein ligase that monoubiquitinates H2B to form H2BK143ub1. H2BK143ub1 gives a specific tag for epigenetic transcriptional activation and is also prerequisite for H3K4me and maybe H3K79me. It thereby plays a central role in histone code and gene regulation. Forms a ubiquitin ligase complex in cooperation with the E2 enzyme UBC2/RAD6. The polypeptide is E3 ubiquitin-protein ligase BRE1-like 2 (HUB2) (Arabidopsis thaliana (Mouse-ear cress)).